An 88-amino-acid polypeptide reads, in one-letter code: MIKNAFISFQEKKEESKGSVEFQVFSFTNKIRRLTSHLELHRKDYLSQRGLRKILGKRQRLLAYLSKKNRVRYKELIKQLNIRELKTR.

It belongs to the universal ribosomal protein uS15 family. In terms of assembly, part of the 30S ribosomal subunit.

The protein localises to the plastid. The protein resides in the chloroplast. The chain is Small ribosomal subunit protein uS15c (rps15) from Lobularia maritima (Sweet alyssum).